The following is a 419-amino-acid chain: MEASTAAETPTPTVSQRDQWIVESQVFHIYQLFANIPPNAQSIIRPWLCYWIIHSIALLGESIDDDLEDNTVDFLNRCQDPNGGYAGGPGQMPHLATTYAAVNTLITLGGEKSLASINRNKLYGFMRRMKQPNGGFRMHDEGEIDVRACYTAISVASVLNILDDELIKNVGDFILSCQTYEGGLAGEPGSEAHGGYTFCGLAAMILIGEVNRLDLPRLLDWVVFRQGKECGFQGRTNKLVDGCYSFWQGGAVALLQRLHSIIDEQMAEASQFVTVSDAPEEKECLDGTSSHATSHIRHEGMNESCSSDVKNIGYNFISEWRQSEPLFHSIALQQYILLCSQEQDGGLRDKPGKRRDHYHSCYCLSGLSLCQYSWSKRPDSPPLPKVVMGPYSNLLEPIHPLFNVVLDRYREAHEFFSQL.

5 PFTB repeats span residues 68–109 (EDNT…ITLG), 119–160 (RNKL…SVLN), 167–208 (IKNV…ILIG), 215–256 (LPRL…ALLQ), and 329–371 (SIAL…SLCQ). (2E,6E)-farnesyl diphosphate is bound by residues 193 to 196 (HGGY) and 235 to 238 (RTNK). Positions 241 and 243 each coordinate Zn(2+). Position 244–247 (244–247 (YSFW)) interacts with (2E,6E)-farnesyl diphosphate. His359 lines the Zn(2+) pocket.

It belongs to the protein prenyltransferase subunit beta family. As to quaternary structure, heterodimer of FTA and FTB. The cofactor is Zn(2+).

It catalyses the reaction L-cysteinyl-[protein] + (2E,6E)-farnesyl diphosphate = S-(2E,6E)-farnesyl-L-cysteinyl-[protein] + diphosphate. Catalyzes the transfer of a farnesyl moiety from farnesyl diphosphate to a cysteine at the fourth position from the C-terminus of several proteins. The beta subunit FTB is responsible for peptide-binding. This is Protein farnesyltransferase subunit beta (FTB) from Pisum sativum (Garden pea).